Reading from the N-terminus, the 196-residue chain is Riboflavin transporter RibU (196 aa).

5 helical membrane passes run 14–34 (LIAI…VPII), 46–66 (IVPV…WVIL), 80–100 (VNTY…ITVL), 120–140 (LISS…FVAI), and 164–184 (MVLP…MIIL).

It belongs to the prokaryotic riboflavin transporter (P-RFT) (TC 2.A.87) family. In E.coli forms a stable energy-coupling factor (ECF) transporter complex probably composed of a membrane-embedded substrate-binding protein (S component), 2 ATP-binding proteins (A components) and 2 transmembrane proteins (T component). May be able to interact with more than 1 S component at a time.

The protein localises to the cell membrane. Its function is as follows. Probable riboflavin-binding protein that interacts with the energy-coupling factor (ECF) ABC-transporter complex. Unlike classic ABC transporters this ECF transporter provides the energy necessary to transport a number of different substrates. The substrates themselves are bound by transmembrane, not extracytoplasmic soluble proteins and transport it into cells. The polypeptide is Riboflavin transporter RibU (ribU) (Leuconostoc mesenteroides subsp. mesenteroides (strain ATCC 8293 / DSM 20343 / BCRC 11652 / CCM 1803 / JCM 6124 / NCDO 523 / NBRC 100496 / NCIMB 8023 / NCTC 12954 / NRRL B-1118 / 37Y)).